The sequence spans 396 residues: Putative 3-phosphoinositide-dependent protein kinase 2 (396 aa).

Residues 1 to 11 (MVRTQTESSTP) are compositionally biased toward polar residues. Positions 1–53 (MVRTQTESSTPPGIPGGSRQGPAMDGTAAEPRPGAGSLQHAQPPPQPRKKRPE) are disordered. The Protein kinase domain maps to 55-315 (FKFGKILGEG…YGPLKAHPFF (261 aa)). ATP contacts are provided by residues 65–67 (SFS) and Lys-84. The PIF-pocket stretch occupies residues 86 to 130 (LEKRHIIKENKVPYVTRERDVMSRLDHPFFVKLYFTFQDDEKLYF). ATP contacts are provided by residues 133 to 135 (SYA) and Glu-139. The active-site Proton acceptor is Asp-178. Glu-182 and Asp-196 together coordinate ATP.

The protein belongs to the protein kinase superfamily. AGC Ser/Thr protein kinase family. PDPK1 subfamily. In terms of processing, phosphorylated on tyrosine and serine/threonine.

It localises to the cytoplasm. The protein localises to the membrane. It catalyses the reaction L-seryl-[protein] + ATP = O-phospho-L-seryl-[protein] + ADP + H(+). It carries out the reaction L-threonyl-[protein] + ATP = O-phospho-L-threonyl-[protein] + ADP + H(+). Its function is as follows. Phosphorylates and activates not only PKB/AKT, but also PKA, PKC-zeta, RPS6KA1 and RPS6KB1. May play a general role in signaling processes and in development. The chain is Putative 3-phosphoinositide-dependent protein kinase 2 from Homo sapiens (Human).